The chain runs to 419 residues: Phosphatidylcholine:ceramide cholinephosphotransferase 1 (419 aa).

The region spanning tryptophan 13 to glutamate 76 is the SAM domain. Serine 14 bears the Phosphoserine mark. Transmembrane regions (helical) follow at residues phenylalanine 142–valine 162, phenylalanine 190–leucine 210, phenylalanine 221–leucine 241, methionine 282–isoleucine 302, and leucine 310–leucine 330. Histidine 291 is a catalytic residue. The Cytoplasmic segment spans residues alanine 331–threonine 419. Residues histidine 334 and aspartate 338 contribute to the active site.

It belongs to the sphingomyelin synthase family. In terms of tissue distribution, isoform 1 is widely expressed, isoform 2 shows a more narrow distribution and isoform 3 is detected only in testis and heart.

The protein resides in the golgi apparatus membrane. It catalyses the reaction an N-acylsphing-4-enine + a 1,2-diacyl-sn-glycero-3-phosphocholine = a sphingomyelin + a 1,2-diacyl-sn-glycerol. The catalysed reaction is 1-(9Z-octadecenoyl)-2-acyl-sn-3-glycerol + a sphingomyelin = a 1-(9Z-octadecenoyl)-2-acyl-sn-glycero-3-phosphocholine + an N-acylsphing-4-enine. The enzyme catalyses N-hexadecanoylsphinganine + a 1,2-diacyl-sn-glycero-3-phosphocholine = N-hexadecanoyl-sphinganine-1-phosphocholine + a 1,2-diacyl-sn-glycerol. It carries out the reaction N-hexadecanoyl-(4R)-hydroxysphinganine + a 1,2-diacyl-sn-glycero-3-phosphocholine = N-hexadecanoyl-(4R)-hydroxysphinganine-phosphocholine + a 1,2-diacyl-sn-glycerol. It catalyses the reaction an N-acylsphing-4-enine + a 1,2-diacyl-sn-glycero-3-phosphoethanolamine = an N-acylsphing-4-enine 1-phosphoethanolamine + a 1,2-diacyl-sn-glycerol. Its pathway is sphingolipid metabolism. In terms of biological role, major sphingomyelin synthase at the Golgi apparatus. Catalyzes the reversible transfer of phosphocholine moiety in sphingomyelin biosynthesis: in the forward reaction transfers phosphocholine head group of phosphatidylcholine (PC) on to ceramide (CER) to form ceramide phosphocholine (sphingomyelin, SM) and diacylglycerol (DAG) as by-product, and in the reverse reaction transfers phosphocholine from SM to DAG to form PC and CER. The direction of the reaction depends on the levels of CER and DAG in Golgi membranes. Converts the newly synthesized CER, that is transported from the endoplasmic reticulum to the trans-Golgi by the Cer transport protein (CERT), to SM. Can form a heteromeric complex with glucosylceramide synthase (GCS) increasing SMS activity and reducing glucosylceramide synthesis, a critical mechanism that controls the metabolic fate of CER in the Golgi. Does not use free phosphorylcholine or CDP-choline as donor. Can also transfer phosphoethanolamine head group of phosphatidylethanolamine (PE) on to CER to form ceramide phosphoethanolamine (CPE). Regulates receptor-mediated signal transduction via mitogenic DAG and proapoptotic CER, as well as via SM, a structural component of membrane rafts that serve as platforms for signal transduction and protein sorting. Plays a role in secretory transport via regulation of DAG pool at the Golgi apparatus and its downstream effects on PRKD1. Its function is as follows. (Microbial infection) Contributes to the brain SM production for Japanese encephalitis virus attachment and infection. The sequence is that of Phosphatidylcholine:ceramide cholinephosphotransferase 1 (Sgms1) from Mus musculus (Mouse).